A 322-amino-acid polypeptide reads, in one-letter code: Beta-ketoacyl-[acyl-carrier-protein] synthase III (322 aa).

Residues C113 and H247 contribute to the active site. The ACP-binding stretch occupies residues 248–252; that stretch reads QANIR. Residue N278 is part of the active site.

Belongs to the thiolase-like superfamily. FabH family. Homodimer.

It is found in the cytoplasm. It catalyses the reaction malonyl-[ACP] + acetyl-CoA + H(+) = 3-oxobutanoyl-[ACP] + CO2 + CoA. It participates in lipid metabolism; fatty acid biosynthesis. Catalyzes the condensation reaction of fatty acid synthesis by the addition to an acyl acceptor of two carbons from malonyl-ACP. Catalyzes the first condensation reaction which initiates fatty acid synthesis and may therefore play a role in governing the total rate of fatty acid production. Possesses both acetoacetyl-ACP synthase and acetyl transacylase activities. Its substrate specificity determines the biosynthesis of branched-chain and/or straight-chain of fatty acids. This Tropheryma whipplei (strain TW08/27) (Whipple's bacillus) protein is Beta-ketoacyl-[acyl-carrier-protein] synthase III.